Reading from the N-terminus, the 433-residue chain is Bifunctional protein GlmU (433 aa).

The pyrophosphorylase stretch occupies residues M1–Q226. UDP-N-acetyl-alpha-D-glucosamine is bound by residues L7–G10, K21, and G80–T81. D106 provides a ligand contact to Mg(2+). Positions 138, 152, 167, and 224 each coordinate UDP-N-acetyl-alpha-D-glucosamine. N224 contributes to the Mg(2+) binding site. The linker stretch occupies residues T227–L247. The interval G248–P433 is N-acetyltransferase. UDP-N-acetyl-alpha-D-glucosamine-binding residues include R311 and K328. The active-site Proton acceptor is the H339. UDP-N-acetyl-alpha-D-glucosamine is bound by residues Y342 and N353. Acetyl-CoA-binding positions include A356, N362–Y363, S381, S399, and R416.

This sequence in the N-terminal section; belongs to the N-acetylglucosamine-1-phosphate uridyltransferase family. The protein in the C-terminal section; belongs to the transferase hexapeptide repeat family. Homotrimer. Requires Mg(2+) as cofactor.

The protein localises to the cytoplasm. It catalyses the reaction alpha-D-glucosamine 1-phosphate + acetyl-CoA = N-acetyl-alpha-D-glucosamine 1-phosphate + CoA + H(+). It carries out the reaction N-acetyl-alpha-D-glucosamine 1-phosphate + UTP + H(+) = UDP-N-acetyl-alpha-D-glucosamine + diphosphate. It functions in the pathway nucleotide-sugar biosynthesis; UDP-N-acetyl-alpha-D-glucosamine biosynthesis; N-acetyl-alpha-D-glucosamine 1-phosphate from alpha-D-glucosamine 6-phosphate (route II): step 2/2. It participates in nucleotide-sugar biosynthesis; UDP-N-acetyl-alpha-D-glucosamine biosynthesis; UDP-N-acetyl-alpha-D-glucosamine from N-acetyl-alpha-D-glucosamine 1-phosphate: step 1/1. Its pathway is bacterial outer membrane biogenesis; LPS lipid A biosynthesis. In terms of biological role, catalyzes the last two sequential reactions in the de novo biosynthetic pathway for UDP-N-acetylglucosamine (UDP-GlcNAc). The C-terminal domain catalyzes the transfer of acetyl group from acetyl coenzyme A to glucosamine-1-phosphate (GlcN-1-P) to produce N-acetylglucosamine-1-phosphate (GlcNAc-1-P), which is converted into UDP-GlcNAc by the transfer of uridine 5-monophosphate (from uridine 5-triphosphate), a reaction catalyzed by the N-terminal domain. The chain is Bifunctional protein GlmU from Helicobacter pylori (strain HPAG1).